Here is a 390-residue protein sequence, read N- to C-terminus: GDSL esterase/lipase At1g28640 (390 aa).

A signal peptide spans 1–26 (MASSLEKLISSFLLVLYSTTIIVASS). Ser-42 (nucleophile) is an active-site residue. N-linked (GlcNAc...) asparagine glycosylation is found at Asn-105, Asn-138, and Asn-321. Residues Asp-346 and His-349 contribute to the active site. An N-linked (GlcNAc...) asparagine glycan is attached at Asn-364.

This sequence belongs to the 'GDSL' lipolytic enzyme family.

The protein resides in the secreted. This chain is GDSL esterase/lipase At1g28640, found in Arabidopsis thaliana (Mouse-ear cress).